A 487-amino-acid polypeptide reads, in one-letter code: NAD-dependent histone deacetylase HST3 (487 aa).

One can recognise a Deacetylase sirtuin-type domain in the interval 15 to 336 (PADTSIKLHE…FLTQEQLDSE (322 aa)). NAD(+) contacts are provided by residues 40–59 (GAGI…DGLY) and 129–132 (QNID). His-167 serves as the catalytic Proton acceptor. Zn(2+) is bound by residues Cys-175, Cys-178, Cys-200, and Cys-203. NAD(+) is bound by residues 261 to 263 (GTS), 291 to 293 (NKT), and Cys-312. The span at 397-406 (VESVSVKEEP) shows a compositional bias: basic and acidic residues. Positions 397–487 (VESVSVKEEP…ARKGITLDQH (91 aa)) are disordered. Basic residues predominate over residues 415–425 (HKPKQATKLKR). Positions 448–459 (DQLSSPASSING) are enriched in polar residues.

This sequence belongs to the sirtuin family. Class I subfamily. The cofactor is Zn(2+).

The protein resides in the cytoplasm. Its subcellular location is the nucleus. The enzyme catalyses N(6)-acetyl-L-lysyl-[protein] + NAD(+) + H2O = 2''-O-acetyl-ADP-D-ribose + nicotinamide + L-lysyl-[protein]. In terms of biological role, NAD-dependent histone deacetylase, which could function in telomeric silencing, cell cycle progression and chromosome stability. The sequence is that of NAD-dependent histone deacetylase HST3 (HST3) from Candida albicans (strain SC5314 / ATCC MYA-2876) (Yeast).